We begin with the raw amino-acid sequence, 140 residues long: Large ribosomal subunit protein bL17 (140 aa).

Positions 119 to 133 (DPSAKGAADRARLEE) are enriched in basic and acidic residues. Residues 119-140 (DPSAKGAADRARLEEEGGMTEE) form a disordered region.

Belongs to the bacterial ribosomal protein bL17 family. As to quaternary structure, part of the 50S ribosomal subunit. Contacts protein L32.

This chain is Large ribosomal subunit protein bL17, found in Maricaulis maris (strain MCS10) (Caulobacter maris).